Reading from the N-terminus, the 449-residue chain is Packaging protein 1 (449 aa).

Residues Met-1–Arg-78 are disordered. Gly-171–Ser-178 serves as a coordination point for ATP. Residues Arg-440–Lys-449 form a DNA-binding region.

This sequence belongs to the adenoviridae packaging protein 1 family. In terms of assembly, homodimer. Part of a genome packaging complex composed of packaging proteins 1, 2 and 3; this complex specifically binds to the packaging sequence on the left end of viral genomic DNA and performs packaging of the viral genome. Interacts with protein 33K.

The protein resides in the virion. It is found in the host nucleus. Its subcellular location is the host nucleoplasm. It localises to the host nucleolus. Functionally, component of the packaging machinery which encapsidates the viral DNA into preformed capsids and transcriptional activator of the viral major late promoter (MLP). Binds, along with packaging proteins 2 and 3, to the specific packaging sequence on the left end of viral genomic DNA and displays ATPase activity thereby providing the power stroke of the packaging machinery. The activity of packaging protein IVa2 is stimulated by protein 33K which acts as a terminase. May be the protein that pumps DNA into the capsid powered by ATP hydrolysis. Specifically binds to the 5'-CG-3' nucleotides of the repeats making up the packaging sequence. Component of the DEF-A and DEF-B transcription factors that bind downstream elements of the major late promoter (MLP), and stimulate transcription from the MLP after initiation of viral DNA replication. DEF-A is a heterodimer packaging proteins 1 and 2 and DEF-B is a homodimer of packaging protein 1. This is Packaging protein 1 from Human adenovirus C serotype 5 (HAdV-5).